A 601-amino-acid chain; its full sequence is MSNDQGSQFLRAPIVVVLGHVDAGKTTLLDKIRGTAVAKREPGTMTQHIGASFLPWKALEAVCGSLVSQIRAEVVIPGFLVIDTPGHEAFSNLRRRGGSIADIAILVVDVLRGLEQQTFESIDILRERKVPFIVAVNKIDKIPGWKSFPNTPFVESVKRQSEAAQLKLEELLSYIIQQFASLGFRSDRYDRIRDFTRVLALVPVSAVTGEGIPDLLLVLAGLAQRYLKGRLLASIAPGKGVILELKEEAGLGMTATLILYDGVIRRGDIVVTGGIEGAFSTRVRALLMPKPLDEMRSPEDRFLEVERIVAAAGVKLVAEGLEKAVPGAPLFVAVSEEEVGRLKQLVEEEISGVKFERDVVGVVVKADTLGTLEALVGYLKKQGIPIRVADIGPVVKRDVVQASMVKEKDPLYAAILAFNVKILPEAQDEAARHGIPVFQERIMYKLVENYQKWLQETRDAEVRKAFEKITPPAVVQILPGYVFRRRDPIIVGVRVVCGRIRSGVPLITKDGREIGEIMQIKEHDKVLDVVSEGAEVAISIRSKAIVGRQVKEGDYLYSNLSIEEINRLLEKYEKYLAENEKSYLRKLMRFKMGLSKEIEYP.

The tr-type G domain maps to Leu-10 to Leu-227. A G1 region spans residues Gly-19–Thr-26. Residue Gly-19–Thr-26 participates in GTP binding. The G2 stretch occupies residues Thr-44–His-48. Positions Asp-83–Gly-86 are G3. GTP is bound by residues Asp-83 to His-87 and Asn-137 to Asp-140. The tract at residues Asn-137–Asp-140 is G4. The G5 stretch occupies residues Ser-205–Val-207.

It belongs to the TRAFAC class translation factor GTPase superfamily. Classic translation factor GTPase family. IF-2 subfamily.

Its function is as follows. Function in general translation initiation by promoting the binding of the formylmethionine-tRNA to ribosomes. Seems to function along with eIF-2. This Thermofilum pendens (strain DSM 2475 / Hrk 5) protein is Probable translation initiation factor IF-2.